Here is a 414-residue protein sequence, read N- to C-terminus: tRNA N6-adenosine threonylcarbamoyltransferase, mitochondrial (414 aa).

The N-terminal 29 residues, 1 to 29, are a transit peptide targeting the mitochondrion; the sequence is MLILTKTAGVFFKPSKRKVYEFLRSFNFH. Lys74 and Lys140 each carry N6-acetyllysine. Residues His147 and His151 each contribute to the a divalent metal cation site. Residues 169-173 and Asp202 contribute to the substrate site; that span reads LISGG. Position 203 is an N6-acetyllysine (Lys203). Positions 222 and 226 each coordinate substrate. 3 positions are modified to N6-acetyllysine: Lys230, Lys240, and Lys299. Substrate is bound by residues 329-330 and Thr357; that span reads SN. Asp358 provides a ligand contact to a divalent metal cation.

It belongs to the KAE1 / TsaD family. In terms of assembly, monomer. It depends on a divalent metal cation as a cofactor. Widely expressed, with maximum expression in pituitary gland, prostate, rectum and uterus.

The protein resides in the mitochondrion. The catalysed reaction is L-threonylcarbamoyladenylate + adenosine(37) in tRNA = N(6)-L-threonylcarbamoyladenosine(37) in tRNA + AMP + H(+). Functionally, required for the formation of a threonylcarbamoyl group on adenosine at position 37 (t(6)A37) in mitochondrial tRNAs that read codons beginning with adenine. Probably involved in the transfer of the threonylcarbamoyl moiety of threonylcarbamoyl-AMP (TC-AMP) to the N6 group of A37. Involved in mitochondrial genome maintenance. This is tRNA N6-adenosine threonylcarbamoyltransferase, mitochondrial from Homo sapiens (Human).